The chain runs to 440 residues: Xylose isomerase (440 aa).

Active-site residues include His-101 and Asp-104. The Mg(2+) site is built by Glu-232, Glu-268, His-271, Asp-296, Asp-307, Asp-309, and Asp-339.

It belongs to the xylose isomerase family. As to quaternary structure, homotetramer. Requires Mg(2+) as cofactor.

The protein resides in the cytoplasm. The enzyme catalyses alpha-D-xylose = alpha-D-xylulofuranose. The sequence is that of Xylose isomerase from Salmonella agona (strain SL483).